Consider the following 166-residue polypeptide: Interferon gamma (166 aa).

The first 23 residues, 1–23 (MNYTTICLAFQLCVIFCSSGYYC), serve as a signal peptide directing secretion. Q24 is modified (pyrrolidone carboxylic acid). N39, N106, and N107 each carry an N-linked (GlcNAc...) asparagine glycan.

This sequence belongs to the type II (or gamma) interferon family. In terms of assembly, homodimer. Interacts with IFNGR1 (via extracellular domain); this interaction promotes IFNGR1 dimerization.

It localises to the secreted. Its function is as follows. Type II interferon produced by immune cells such as T-cells and NK cells that plays crucial roles in antimicrobial, antiviral, and antitumor responses by activating effector immune cells and enhancing antigen presentation. Primarily signals through the JAK-STAT pathway after interaction with its receptor IFNGR1 to affect gene regulation. Upon IFNG binding, IFNGR1 intracellular domain opens out to allow association of downstream signaling components JAK2, JAK1 and STAT1, leading to STAT1 activation, nuclear translocation and transcription of IFNG-regulated genes. Many of the induced genes are transcription factors such as IRF1 that are able to further drive regulation of a next wave of transcription. Plays a role in class I antigen presentation pathway by inducing a replacement of catalytic proteasome subunits with immunoproteasome subunits. In turn, increases the quantity, quality, and repertoire of peptides for class I MHC loading. Increases the efficiency of peptide generation also by inducing the expression of activator PA28 that associates with the proteasome and alters its proteolytic cleavage preference. Up-regulates as well MHC II complexes on the cell surface by promoting expression of several key molecules such as cathepsins B/CTSB, H/CTSH, and L/CTSL. Participates in the regulation of hematopoietic stem cells during development and under homeostatic conditions by affecting their development, quiescence, and differentiation. This Mustela putorius furo (European domestic ferret) protein is Interferon gamma (IFNG).